A 194-amino-acid chain; its full sequence is Isopentenyl-diphosphate Delta-isomerase (194 aa).

Residues histidine 35 and histidine 42 each contribute to the Mn(2+) site. The Nudix hydrolase domain occupies 40–174; sequence PLHLAFSSYL…PWALSPWSVD (135 aa). Cysteine 77 is a catalytic residue. Histidine 79 is a binding site for Mn(2+). Glutamate 97 contacts Mg(2+). The Mn(2+) site is built by glutamate 124 and glutamate 126. Glutamate 126 is an active-site residue.

The protein belongs to the IPP isomerase type 1 family. Mg(2+) is required as a cofactor. Requires Mn(2+) as cofactor.

The protein localises to the cytoplasm. The enzyme catalyses isopentenyl diphosphate = dimethylallyl diphosphate. It functions in the pathway isoprenoid biosynthesis; dimethylallyl diphosphate biosynthesis; dimethylallyl diphosphate from isopentenyl diphosphate: step 1/1. Functionally, catalyzes the 1,3-allylic rearrangement of the homoallylic substrate isopentenyl (IPP) to its highly electrophilic allylic isomer, dimethylallyl diphosphate (DMAPP). The sequence is that of Isopentenyl-diphosphate Delta-isomerase from Frankia alni (strain DSM 45986 / CECT 9034 / ACN14a).